The sequence spans 160 residues: MAAFRPPQFKKSKILAENRRARYEYAFEDFYEAGLALTGTEVKSLRFGQGSIAESYAEVKNGEVTLINANIPEFSHGNRFNHEPKRPRKLLLHEREIRKMQTAVSREGMTVIPVSLYFNNKGKAKLELAIARGKKTHDKRATIKERDWKRDQARLLRDKG.

The protein belongs to the SmpB family.

Its subcellular location is the cytoplasm. Its function is as follows. Required for rescue of stalled ribosomes mediated by trans-translation. Binds to transfer-messenger RNA (tmRNA), required for stable association of tmRNA with ribosomes. tmRNA and SmpB together mimic tRNA shape, replacing the anticodon stem-loop with SmpB. tmRNA is encoded by the ssrA gene; the 2 termini fold to resemble tRNA(Ala) and it encodes a 'tag peptide', a short internal open reading frame. During trans-translation Ala-aminoacylated tmRNA acts like a tRNA, entering the A-site of stalled ribosomes, displacing the stalled mRNA. The ribosome then switches to translate the ORF on the tmRNA; the nascent peptide is terminated with the 'tag peptide' encoded by the tmRNA and targeted for degradation. The ribosome is freed to recommence translation, which seems to be the essential function of trans-translation. This chain is SsrA-binding protein, found in Zymomonas mobilis subsp. mobilis (strain ATCC 31821 / ZM4 / CP4).